Consider the following 289-residue polypeptide: F-box protein PP2-B15 (289 aa).

The 43-residue stretch at 1–43 (MMLPEACVATILSFTTPADTISSAAVSSVFRVAGDSDFVWEKF) folds into the F-box domain.

In Arabidopsis thaliana (Mouse-ear cress), this protein is F-box protein PP2-B15 (PP2B15).